A 458-amino-acid polypeptide reads, in one-letter code: MTDTRIERDSMGELAVPATALYGAQTQRAVNNFPVSGQRMPQAFVRALLLAKAAAARANVSLQQLDAPMGEAIADTCLQLLQEDFMQHFPVDVFQTGSGTSSNMNANEVVATLASRRLGGKVNPNDHVNCGQSSNDIIPSTIHISAALEISERLLPALRHLEQTIQSKAGEVHAYVKTGRTHLMDAMPVRMSQVLGGWAQQVRQAGVHIESVLPALQQLAQGGTAVGTGINAHPRFAERFSQELNDLTGLAFRPGDDFFALIGSQDTAVAASGQLKTLAVTLMKLANDLRWMNSGPLAGLGEIELEALQPGSSIMPGKVNPVIPEATAMVAAQVIGNDAAIAVAGQSGNFELNVMLPLVADNLLHSIQLLANVSRLLADKAIASFKVNQGKLSEALARNPILVTALNPIIGYQKAAEIAKQAYREGRPIIDVALENTDLDRARLEVLLDPEKLTAGGL.

Substrate-binding positions include 98–100 (SGT), 123–126 (NPND), 133–135 (SSN), and Thr181. Catalysis depends on His182, which acts as the Proton donor/acceptor. The active site involves Ser312. Residues Ser313 and 318-320 (KVN) each bind substrate.

Belongs to the class-II fumarase/aspartase family. Fumarase subfamily. As to quaternary structure, homotetramer.

The protein resides in the cytoplasm. The catalysed reaction is (S)-malate = fumarate + H2O. It functions in the pathway carbohydrate metabolism; tricarboxylic acid cycle; (S)-malate from fumarate: step 1/1. Its function is as follows. Involved in the TCA cycle. Catalyzes the stereospecific interconversion of fumarate to L-malate. The protein is Fumarate hydratase class II 2 of Pseudomonas aeruginosa (strain ATCC 15692 / DSM 22644 / CIP 104116 / JCM 14847 / LMG 12228 / 1C / PRS 101 / PAO1).